Here is a 501-residue protein sequence, read N- to C-terminus: Ribose import ATP-binding protein RbsA (501 aa).

2 ABC transporter domains span residues Leu-5–Lys-241 and Leu-252–Val-498. Gly-37–Ser-44 provides a ligand contact to ATP.

It belongs to the ABC transporter superfamily. Ribose importer (TC 3.A.1.2.1) family. In terms of assembly, the complex is composed of an ATP-binding protein (RbsA), two transmembrane proteins (RbsC) and a solute-binding protein (RbsB).

It localises to the cell inner membrane. The catalysed reaction is D-ribose(out) + ATP + H2O = D-ribose(in) + ADP + phosphate + H(+). In terms of biological role, part of the ABC transporter complex RbsABC involved in ribose import. Responsible for energy coupling to the transport system. This Hahella chejuensis (strain KCTC 2396) protein is Ribose import ATP-binding protein RbsA.